The sequence spans 465 residues: MKTMFEKIWEDHLVGELDAGSYLIYIDRHLIHEVTSPQAFEGLKLAGRKVRRPEATFATMDHNVSTRTRDLSLADPVSAIQMQTLKKNCDENGIRVYDFQNPDQGIIHVIAPEMGLTHPGMTIVCGDSHTSTHGAFGALAFGIGTSEVEHVLATQTLVQKRAKTMEIRVDGKLSDKVTAKDIILAIIGKIGTAGATGYVIEYRGSAIQALSMEARMTICNMSIEAGARAGLIAPDETTFNYIQGKDFSPKGVEWDLAVKKWKHYVTDEGAKFDRTVILHADEIAPMVTWGTSPSQVVSIKGVVPDPKDANDPVEKIGIESALKYMDLKSGQKIEDISINKVFIGSCTNSRIEDLRAAAATVKGKKVSSKVQAIVVPGSGRVKRQAEQEGLDKIFTAAGFEWRNPGCSMCLAMNDDVLEPGDRCASTSNRNFEGRQGKGGRTHLVGPEMAAAAAIEGHFVDIRNWK.

The [4Fe-4S] cluster site is built by cysteine 346, cysteine 406, and cysteine 409.

Belongs to the aconitase/IPM isomerase family. LeuC type 1 subfamily. In terms of assembly, heterodimer of LeuC and LeuD. [4Fe-4S] cluster serves as cofactor.

It carries out the reaction (2R,3S)-3-isopropylmalate = (2S)-2-isopropylmalate. Its pathway is amino-acid biosynthesis; L-leucine biosynthesis; L-leucine from 3-methyl-2-oxobutanoate: step 2/4. In terms of biological role, catalyzes the isomerization between 2-isopropylmalate and 3-isopropylmalate, via the formation of 2-isopropylmaleate. This is 3-isopropylmalate dehydratase large subunit from Leptospira interrogans serogroup Icterohaemorrhagiae serovar copenhageni (strain Fiocruz L1-130).